The chain runs to 493 residues: Dihydro-heme d1 dehydrogenase (493 aa).

Residues 1–18 form the signal peptide; sequence MRLIGLALGLLLGALAQA. In terms of domain architecture, Cytochrome c spans 19 to 96; the sequence is GEAPGEALYR…ALVAYLYQAP (78 aa). Positions 31, 34, 35, 68, and 73 each coordinate heme c. The segment at 114-468 is D1-heme domain; that stretch reads PHPLATLPSR…YDAHSLEEVK (355 aa). H165, G167, K169, R182, R207, N208, H341, R390, and H435 together coordinate heme d1. Residue R182 coordinates heme c.

The protein belongs to the cytochrome c family. As to quaternary structure, monomer. It depends on heme c as a cofactor.

Its subcellular location is the periplasm. It carries out the reaction dihydro-heme d1 + A = heme d1 + AH2. Its pathway is porphyrin-containing compound metabolism. In terms of biological role, involved in heme d1 biosynthesis. Catalyzes the introduction of a double bond into the propionate side chain of pyrrole ring D of dihydro-heme d1, therefore converting dihydro-heme d1 to heme d1. In Pseudomonas aeruginosa (strain ATCC 15692 / DSM 22644 / CIP 104116 / JCM 14847 / LMG 12228 / 1C / PRS 101 / PAO1), this protein is Dihydro-heme d1 dehydrogenase.